The primary structure comprises 101 residues: Small ribosomal subunit protein uS14 (101 aa).

This sequence belongs to the universal ribosomal protein uS14 family. As to quaternary structure, part of the 30S ribosomal subunit. Contacts proteins S3 and S10.

Its function is as follows. Binds 16S rRNA, required for the assembly of 30S particles and may also be responsible for determining the conformation of the 16S rRNA at the A site. This Ralstonia pickettii (strain 12J) protein is Small ribosomal subunit protein uS14.